The primary structure comprises 267 residues: MSRLKIPSQLLRGGRGFSVLSRPAANYAGHVPLTPVERCTMAVGSAIGSLLNPRRHDLIATLGETTATPYFIYRLRDAMLSDPTGRRILRDRPRITSQTLSLPYLRSLPPTSLGATFASWLDREGVSPDTRSRVRYIDDEECAYVMQRYRECHDFYHAVTGLPIVVEGELALKIFEYMNTGLPMTGLSAAAVVRLKGAERQRFWDVYLPWAVRSGAGSKELICVYWEELLERDVGELRAELGIEVPPDMREMRRRHRKQKQQEKQEK.

The N-terminal 17 residues, 1-17 (MSRLKIPSQLLRGGRGF), are a transit peptide targeting the mitochondrion. Residues H153, D154, H157, and E169 each contribute to the Zn(2+) site.

This sequence belongs to the COQ4 family. In terms of assembly, component of a multi-subunit COQ enzyme complex, composed of at least COQ3, COQ4, COQ5, COQ6, COQ7 and COQ9. It depends on Zn(2+) as a cofactor.

The protein localises to the mitochondrion inner membrane. It carries out the reaction a 4-hydroxy-3-methoxy-5-(all-trans-polyprenyl)benzoate + H(+) = a 2-methoxy-6-(all-trans-polyprenyl)phenol + CO2. It functions in the pathway cofactor biosynthesis; ubiquinone biosynthesis. Functionally, lyase that catalyzes the C1-decarboxylation of 4-hydroxy-3-methoxy-5-(all-trans-polyprenyl)benzoic acid into 2-methoxy-6-(all-trans-polyprenyl)phenol during ubiquinone biosynthesis. This is Ubiquinone biosynthesis protein COQ4, mitochondrial from Arthroderma otae (strain ATCC MYA-4605 / CBS 113480) (Microsporum canis).